We begin with the raw amino-acid sequence, 341 residues long: Thromboxane A2 receptor (341 aa).

At 1 to 29 (MWPNGTSLGACFRPVNITLQERRAIASPW) the chain is on the extracellular side. N-linked (GlcNAc...) asparagine glycosylation is found at Asn-4 and Asn-16. The helical transmembrane segment at 30 to 52 (FAASFCALGLGSNLLALSVLAGA) threads the bilayer. Over 53 to 65 (RPGAGPRSSFLAL) the chain is Cytoplasmic. Residues 66–86 (LCGLVLTDFLGLLVTGAIVAS) form a helical membrane-spanning segment. Residues 87-105 (QHAALLDWRATDPSCRLCY) are Extracellular-facing. Cys-104 and Cys-181 form a disulfide bridge. A helical membrane pass occupies residues 106 to 127 (FMGVAMVFFGLCPLLLGAAMAS). At 128–147 (ERFVGITRPFSRPTATSRRA) the chain is on the cytoplasmic side. A helical membrane pass occupies residues 148–170 (WATVGLVWVAAGALGLLPLLGLG). The Extracellular portion of the chain corresponds to 171–191 (RYSVQYPGSWCFLTLGTQRGD). The helical transmembrane segment at 192 to 217 (VVFGLIFALLGSASVGLSLLLNTVSV) threads the bilayer. The Cytoplasmic portion of the chain corresponds to 218–244 (ATLCRVYHTREATQRPRDCEVEMMVQL). The chain crosses the membrane as a helical span at residues 245-268 (VGIMVVATVCWMPLLVFIMQTLLQ). Residues 269-287 (TPPVMSFSGQLLRATEHQL) are Extracellular-facing. Residues 288 to 309 (LIYLRVATWNQILDPWVYILFR) form a helical membrane-spanning segment. The Cytoplasmic portion of the chain corresponds to 310–341 (RSVLRRLHPRFSSQLQAVSLRRPPAQAMLSGP). Position 328 is a phosphoserine (Ser-328).

The protein belongs to the G-protein coupled receptor 1 family. In terms of assembly, interacts with RPGRIP1L. Interacts with RACK1; the interaction regulates TBXA2R cell surface expression.

The protein localises to the cell membrane. In terms of biological role, receptor for thromboxane A2 (TXA2), a potent stimulator of platelet aggregation. The activity of this receptor is mediated by a G-protein that activates a phosphatidylinositol-calcium second messenger system. In the kidney, the binding of TXA2 to glomerular TP receptors causes intense vasoconstriction. Activates phospholipase C and adenylyl cyclase. The chain is Thromboxane A2 receptor (Tbxa2r) from Mus musculus (Mouse).